The following is a 142-amino-acid chain: Dromaiocalcin-1 (142 aa).

3 cysteine pairs are disulfide-bonded: Cys-13-Cys-24, Cys-41-Cys-138, and Cys-113-Cys-130. The C-type lectin domain maps to 20–139 (FRGNCYGYFR…CGERNAFICK (120 aa)).

It localises to the secreted. It is found in the extracellular space. The protein resides in the extracellular matrix. The protein is Dromaiocalcin-1 of Dromaius novaehollandiae (Emu).